We begin with the raw amino-acid sequence, 52 residues long: Large ribosomal subunit protein eL39 (52 aa).

It belongs to the eukaryotic ribosomal protein eL39 family. Interacts with YIH1.

In Encephalitozoon cuniculi (strain GB-M1) (Microsporidian parasite), this protein is Large ribosomal subunit protein eL39 (RPL39).